The following is a 451-amino-acid chain: Proton-coupled amino acid transporter-like protein acs (451 aa).

Topologically, residues 1 to 48 (MNDDIKTVTVYPTTLELTTPTKSANGSNDDYDPHQHRELKNPTTNFQT) are cytoplasmic. A helical transmembrane segment spans residues 49–69 (FAHFLKASVGTGVLAMPSAFA). The Extracellular segment spans residues 70–80 (HAGYVNGTLLT). A glycan (N-linked (GlcNAc...) asparagine) is linked at asparagine 75. A helical transmembrane segment spans residues 81–101 (LIIGSLALYCLHILIKCMYIL). Residues 102-136 (CKRQRVPYVSFSQAMNLGLKQGPPWLRCLAPIAVP) lie on the Cytoplasmic side of the membrane. A helical transmembrane segment spans residues 137 to 157 (FVDGFLAFYHFGICCVYVVFI). The Extracellular portion of the chain corresponds to 158-167 (AESIKQLVDE). Residues 168-188 (YLVVWDVRIHMCIIIVPLLLI) form a helical membrane-spanning segment. The Cytoplasmic portion of the chain corresponds to 189 to 199 (YSIKNLKLLAP). The chain crosses the membrane as a helical span at residues 200–220 (FSSAANLLLLVGFGIILYYIF). Residues 221-237 (EELPPLSERDPFVAAGK) lie on the Extracellular side of the membrane. The helical transmembrane segment at 238–258 (LPTFFGTVLFALEAVGVILAI) threads the bilayer. Residues 259-272 (EENMATPKSFVGPC) lie on the Cytoplasmic side of the membrane. A helical transmembrane segment spans residues 273–293 (GILNSGMSIVLGLYVLLGFFG). Topologically, residues 294 to 320 (YWKYGNESEGSITLNIPQSEIPAQVVK) are extracellular. N-linked (GlcNAc...) asparagine glycosylation is present at asparagine 299. The chain crosses the membrane as a helical span at residues 321 to 341 (VFFAITTWISYALQGYVTAHI). Topologically, residues 342–357 (LWDKYLAKRFKETRQT) are cytoplasmic. Residues 358–378 (FYELIFRAIIVLLTFGCAVAI) traverse the membrane as a helical segment. Over 379–382 (PDLS) the chain is Extracellular. A helical transmembrane segment spans residues 383–403 (VFLSLVGSFCLSILGLIFPVL). The Cytoplasmic segment spans residues 404–420 (LQICVQYTEGYGPFRIK). A helical transmembrane segment spans residues 421–441 (LIINLLLLCFGIFGGVVGTYV). The Extracellular segment spans residues 442–451 (SILDIIAVYK).

The protein belongs to the amino acid/polyamine transporter 2 family. Expressed in the proximal and distal regions of the midgut; expressed in enterocytes and progenitor cells. Expression increases in response to intestinal bacterial infection and spreads further into the midgut, eventually covering the entire midgut.

The protein localises to the cell membrane. It is found in the late endosome membrane. Its subcellular location is the lysosome membrane. The protein resides in the basal cell membrane. In terms of biological role, amino acid transporter which has pH-dependent electrogenic transport activity for alanine, glycine and proline. Plays a role in positive regulation of growth by directly or indirectly modulating the effects of the TOR signaling pathway. Required in enterocytes for the efficient recovery of gut epithelium following the cytoplasmic purge response to bacterial infection. Acts cell-autonomously to promote the retrograde transport of amino acids into the intestinal epithelium. Acts non-cell-autonomously through the insulin signaling pathway to stimulate Myc expression and the release of amino acids from nutrient stores into the hemolymph. This is Proton-coupled amino acid transporter-like protein acs from Drosophila melanogaster (Fruit fly).